The sequence spans 327 residues: Protoheme IX farnesyltransferase (327 aa).

7 consecutive transmembrane segments (helical) span residues 55–75 (LVCTLGGGALAAAAAGVLNCL), 101–121 (AAFVGAVSCTLAAAALLVSGV), 124–144 (LAAGLSLLGLCSYVLLYTALL), 152–172 (IVVGGVAGAIPPLVGAAAATG), 180–200 (WLFALVMVWTPAHFWALALLL), 237–257 (FLGIWALPEGGALYGLLILPF), and 278–298 (AKGLFRWSILYLFGVCLLLVM).

It belongs to the UbiA prenyltransferase family. Protoheme IX farnesyltransferase subfamily.

The protein localises to the cell inner membrane. The catalysed reaction is heme b + (2E,6E)-farnesyl diphosphate + H2O = Fe(II)-heme o + diphosphate. It functions in the pathway porphyrin-containing compound metabolism; heme O biosynthesis; heme O from protoheme: step 1/1. Its function is as follows. Converts heme B (protoheme IX) to heme O by substitution of the vinyl group on carbon 2 of heme B porphyrin ring with a hydroxyethyl farnesyl side group. In Synechococcus sp. (strain CC9311), this protein is Protoheme IX farnesyltransferase.